Here is a 116-residue protein sequence, read N- to C-terminus: Large ribosomal subunit protein uL22c (116 aa).

It belongs to the universal ribosomal protein uL22 family. In terms of assembly, part of the 50S ribosomal subunit.

Its subcellular location is the plastid. The protein localises to the chloroplast. Functionally, this protein binds specifically to 23S rRNA. The globular domain of the protein is located near the polypeptide exit tunnel on the outside of the subunit, while an extended beta-hairpin is found that lines the wall of the exit tunnel in the center of the 70S ribosome. The protein is Large ribosomal subunit protein uL22c (rpl22) of Porphyra purpurea (Red seaweed).